The following is a 271-amino-acid chain: Protein ABHD14A (271 aa).

The helical; Signal-anchor for type II membrane protein transmembrane segment at 35-55 (VALLGLSLLLMLLLYVGLPGP) threads the bilayer. N-linked (GlcNAc...) asparagine glycosylation is present at Asn67. Ser171 (charge relay system) is an active-site residue. Asn201 carries N-linked (GlcNAc...) asparagine glycosylation. Active-site charge relay system residues include Asp222 and His249.

It belongs to the AB hydrolase superfamily. ABHD14 family.

The protein resides in the cytoplasm. It localises to the membrane. Its function is as follows. Possible role in granule neuron development. This Homo sapiens (Human) protein is Protein ABHD14A.